The primary structure comprises 215 residues: UPF0126 membrane protein DR_2368 (215 aa).

The next 6 helical transmembrane spans lie at 15–35, 39–59, 75–95, 101–121, 123–143, and 162–182; these read LHWL…LLGV, FDLF…GAIR, TYLW…ERLA, LSLF…LGAI, IGLG…GGGI, and LYAT…PHFT.

It belongs to the UPF0126 family.

It is found in the cell membrane. The sequence is that of UPF0126 membrane protein DR_2368 from Deinococcus radiodurans (strain ATCC 13939 / DSM 20539 / JCM 16871 / CCUG 27074 / LMG 4051 / NBRC 15346 / NCIMB 9279 / VKM B-1422 / R1).